Consider the following 220-residue polypeptide: CRISPR system Cms endoribonuclease Csm3 (220 aa).

The protein belongs to the CRISPR-associated Csm3 family. Part of the Csm effector complex that includes at least Cas10(1), Csm2(3), Csm3(5), Csm4(1), Csm5(1) and mature crRNA. The Csm complex is elongated and slightly twisted with a maximal length of 215 Angstroms and a diameter of 75-80 Angstroms. It has been modeled to have a central protein filamant of Csm3 subunits along which the dsRNA helix of paired crRNA and target RNA binds. The filament is capped at one end by Cas10 and Csm4 and at the other end by Csm5; ssDNA is thought to bind to the N-terminal HD domain of Cas10. Csm with a precursor crRNA does not include Csm5, while Cas6, the enzyme probably involved in pre-crRNA processing, is found associated with a subset of the Csm complex. A metal cation serves as cofactor.

Its activity is regulated as follows. Target ssRNase is inhibited by EDTA. Functionally, CRISPR (clustered regularly interspaced short palindromic repeat) is an adaptive immune system that provides protection against mobile genetic elements (viruses, transposable elements and conjugative plasmids). CRISPR clusters contain spacers, sequences complementary to antecedent mobile elements, and target invading nucleic acids. CRISPR clusters are transcribed and processed into CRISPR RNA (crRNA). The type III-A Csm effector complex binds crRNA and acts as a crRNA-guided RNase, DNase and cyclic oligoadenylate synthase; binding of target RNA cognate to the crRNA is required for all activities. In a heterologous host this Csm effector complex restricts ssRNA phage MS2, suggesting it may target RNA viruses in vivo. Its function is as follows. Csm functions as a non-specific ssDNase. Base-pairing between crRNA and target RNA to form a ternary Csm complex activates a ssDNase activity; target RNA cleavage suppresses the ssDNase, a temporal control that prevents uncontrolled DNA degradation. Viral RNA transcripts probably tether the Csm complex to the viral genome, recruiting Cas10 ssDNA activity which is able to degrade DNA in the transcription bubble, spatially controlling the DNase activity. In terms of biological role, this subunit has the target ssRNA endonuclease activity; it cleaves multiple sites in the target RNA at 6 nucleotide intervals. The number of cleavage sites in the target RNA correlates with the number of Csm3 subunits in the Csm effector complex. In the Csm complex target RNA and ssDNA are cleaved simultaneously, although RNase activity (of Csm3) is much faster. RNA cleavage by Csm3 is not required for ssDNase activity as Csm complex with inactive Csm3 still has ssDNase activity; however as the cleaved target RNA products dissociate away ssDNase activity decreases. The sequence is that of CRISPR system Cms endoribonuclease Csm3 from Streptococcus thermophilus.